Here is a 428-residue protein sequence, read N- to C-terminus: UPF0229 protein YeaH (428 aa).

Basic and acidic residues predominate over residues 78–90; it reads GNDHFIQNDRIER. The disordered stretch occupies residues 78-111; the sequence is GNDHFIQNDRIERPQGGGGGGSGSGQGQASQDGE. The span at 92–103 shows a compositional bias: gly residues; sequence QGGGGGGSGSGQ.

It belongs to the UPF0229 family.

The sequence is that of UPF0229 protein YeaH from Salmonella heidelberg (strain SL476).